Consider the following 363-residue polypeptide: Phosphoserine aminotransferase (363 aa).

R42 is a binding site for L-glutamate. Pyridoxal 5'-phosphate contacts are provided by residues 76 to 77 (GR), W102, T156, D175, and Q198. An N6-(pyridoxal phosphate)lysine modification is found at K199. Pyridoxal 5'-phosphate is bound at residue 240 to 241 (NT).

Belongs to the class-V pyridoxal-phosphate-dependent aminotransferase family. SerC subfamily. Homodimer. Requires pyridoxal 5'-phosphate as cofactor.

It is found in the cytoplasm. The catalysed reaction is O-phospho-L-serine + 2-oxoglutarate = 3-phosphooxypyruvate + L-glutamate. The enzyme catalyses 4-(phosphooxy)-L-threonine + 2-oxoglutarate = (R)-3-hydroxy-2-oxo-4-phosphooxybutanoate + L-glutamate. It functions in the pathway amino-acid biosynthesis; L-serine biosynthesis; L-serine from 3-phospho-D-glycerate: step 2/3. Its pathway is cofactor biosynthesis; pyridoxine 5'-phosphate biosynthesis; pyridoxine 5'-phosphate from D-erythrose 4-phosphate: step 3/5. Its function is as follows. Catalyzes the reversible conversion of 3-phosphohydroxypyruvate to phosphoserine and of 3-hydroxy-2-oxo-4-phosphonooxybutanoate to phosphohydroxythreonine. The chain is Phosphoserine aminotransferase from Shewanella baltica (strain OS185).